Here is a 702-residue protein sequence, read N- to C-terminus: MNSLFASTARGLEELLKTELEKLGAVGCQVVQGGVHFQGDTRLIYQSLMWSRLASRIILPMGECKVYSDLDLYLGVQAINWTEIFNPGATFAVHFSGLNDTIRNSQYGAMKVKDAIVDAFTRKNLPRPNVDRESPDLRINVWLNKETASIALDLSGDGLHLRGYRDRTGLAPIKETLAAAIVMRSGWQPGTPLLDPMCGSGTLLIEAAMWATDRAPGLHRGHWGFSGWAQHDETIWQEVKAEAQTRARKGLAEYSSHFYGSDSDARVIERARSNARRAGIGELITFEVKDVAQLSNPLPKGPYGTVISNPPYGERLDSEPALIALHSLLGRTMKNQFGGWNLSLFSASPDLLGSLQLRADKQFKAKNGPLDCVQKNYHIAETTADSKPATVAEDYANRLRKNLKKLEKWARQEGIECYRLYDADLPEYNVAVDRYGDWAVIQEYAPPKTVDAQKARQRLFDIIAATLSVLGIPPNKLVLKTRERQKGKNQYQKMSEKGEFLDVSEYNARLWVNLTDYLDTGLFLDHRIARRMLGEMSKGKDFLNLFSYTGSASVHAGLGGARSTTTVDMSRTYLEWAERNLRLNGLSGRAHRLIQADCLGWLREANEQFDLIFIDPPTFSNSKRMEESFDVQRDHVALMKDLKRLLRKGGTIMFSNNKRGFRMDLEGLAELGLTAQEITQKTLSPDFARNRQIHNCWLIRAA.

The 112-residue stretch at Leu43–Leu154 folds into the THUMP domain.

It belongs to the methyltransferase superfamily. RlmKL family.

The protein resides in the cytoplasm. It carries out the reaction guanosine(2445) in 23S rRNA + S-adenosyl-L-methionine = N(2)-methylguanosine(2445) in 23S rRNA + S-adenosyl-L-homocysteine + H(+). The enzyme catalyses guanosine(2069) in 23S rRNA + S-adenosyl-L-methionine = N(2)-methylguanosine(2069) in 23S rRNA + S-adenosyl-L-homocysteine + H(+). Functionally, specifically methylates the guanine in position 2445 (m2G2445) and the guanine in position 2069 (m7G2069) of 23S rRNA. This chain is Ribosomal RNA large subunit methyltransferase K/L, found in Salmonella gallinarum (strain 287/91 / NCTC 13346).